The following is a 453-amino-acid chain: Ribosomal protein uS12 methylthiotransferase RimO (453 aa).

An MTTase N-terminal domain is found at 6–116; that stretch reads PKVGFVSLGC…VMEAVHEALP (111 aa). Residues C15, C51, C80, C147, C151, and C154 each contribute to the [4Fe-4S] cluster site. Residues 133 to 370 enclose the Radical SAM core domain; that stretch reads LTPRHYAYLK…MEKQAQISAA (238 aa). In terms of domain architecture, TRAM spans 373–441; the sequence is EAKIGTVQQC…EHDLYGDALP (69 aa).

This sequence belongs to the methylthiotransferase family. RimO subfamily. It depends on [4Fe-4S] cluster as a cofactor.

It is found in the cytoplasm. It catalyses the reaction L-aspartate(89)-[ribosomal protein uS12]-hydrogen + (sulfur carrier)-SH + AH2 + 2 S-adenosyl-L-methionine = 3-methylsulfanyl-L-aspartate(89)-[ribosomal protein uS12]-hydrogen + (sulfur carrier)-H + 5'-deoxyadenosine + L-methionine + A + S-adenosyl-L-homocysteine + 2 H(+). Functionally, catalyzes the methylthiolation of an aspartic acid residue of ribosomal protein uS12. This Stenotrophomonas maltophilia (strain K279a) protein is Ribosomal protein uS12 methylthiotransferase RimO.